The primary structure comprises 138 residues: Basic phospholipase A2 Sct-N6 (138 aa).

The first 16 residues, 1 to 16 (MRTFWIVAVLLVGVEG), serve as a signal peptide directing secretion. 7 disulfide bridges follow: Cys-42-Cys-131, Cys-44-Cys-60, Cys-59-Cys-111, Cys-65-Cys-138, Cys-66-Cys-104, Cys-73-Cys-97, and Cys-91-Cys-102. Residues Tyr-43, Gly-45, and Gly-47 each contribute to the Ca(2+) site. His-63 is a catalytic residue. Asp-64 contributes to the Ca(2+) binding site. Asp-105 is an active-site residue.

Belongs to the phospholipase A2 family. Group II subfamily. D49 sub-subfamily. Ca(2+) is required as a cofactor. Expressed by the venom gland.

The protein resides in the secreted. The catalysed reaction is a 1,2-diacyl-sn-glycero-3-phosphocholine + H2O = a 1-acyl-sn-glycero-3-phosphocholine + a fatty acid + H(+). In terms of biological role, snake venom phospholipase A2 (PLA2) that displays edema-inducing activities, as well as presynaptic neurotoxicity and low myotoxicity. PLA2 catalyzes the calcium-dependent hydrolysis of the 2-acyl groups in 3-sn-phosphoglycerides. This Sistrurus tergeminus (Western massasauga) protein is Basic phospholipase A2 Sct-N6.